Consider the following 190-residue polypeptide: Peptidyl-tRNA hydrolase (190 aa).

Tyrosine 18 lines the tRNA pocket. Histidine 23 serves as the catalytic Proton acceptor. TRNA contacts are provided by tyrosine 69, asparagine 71, and asparagine 117.

It belongs to the PTH family. As to quaternary structure, monomer.

Its subcellular location is the cytoplasm. The catalysed reaction is an N-acyl-L-alpha-aminoacyl-tRNA + H2O = an N-acyl-L-amino acid + a tRNA + H(+). In terms of biological role, hydrolyzes ribosome-free peptidyl-tRNAs (with 1 or more amino acids incorporated), which drop off the ribosome during protein synthesis, or as a result of ribosome stalling. Functionally, catalyzes the release of premature peptidyl moieties from peptidyl-tRNA molecules trapped in stalled 50S ribosomal subunits, and thus maintains levels of free tRNAs and 50S ribosomes. The polypeptide is Peptidyl-tRNA hydrolase (Rhodococcus erythropolis (strain PR4 / NBRC 100887)).